A 187-amino-acid chain; its full sequence is Large ribosomal subunit protein uL6 (187 aa).

The protein belongs to the universal ribosomal protein uL6 family. In terms of assembly, part of the 50S ribosomal subunit.

This protein binds to the 23S rRNA, and is important in its secondary structure. It is located near the subunit interface in the base of the L7/L12 stalk, and near the tRNA binding site of the peptidyltransferase center. The sequence is that of Large ribosomal subunit protein uL6 from Roseiflexus sp. (strain RS-1).